The primary structure comprises 183 residues: ADP-ribosylation factor-like protein 1 (183 aa).

Residue Gly2 is the site of N-myristoyl glycine attachment. Residues 25–32 (GLDGAGKT), 68–72 (DLGGQ), and 127–130 (NKQD) contribute to the GTP site.

Belongs to the small GTPase superfamily. Arf family. Homodimer. Interacts with IMH1 (via GRIP domain); the interaction is dependent on GTP. Interacts with MON2.

The protein resides in the golgi apparatus. Recruits golgins such as IMH1 to the Golgi. Can bind and hydrolyze GTP. May be involved in trafficking events within the endosomal system. The protein is ADP-ribosylation factor-like protein 1 (ARL1) of Saccharomyces cerevisiae (strain ATCC 204508 / S288c) (Baker's yeast).